The following is a 154-amino-acid chain: Nuclear cap-binding protein subunit 2 (154 aa).

The disordered stretch occupies residues 1–23 (MSTSVDLSSYRDQHFKGSRSEQE). Basic and acidic residues predominate over residues 9–23 (SYRDQHFKGSRSEQE). Residues Y10, Y33, 102–106 (RVDWD), 113–117 (RQYGR), and 123–124 (QV) contribute to the mRNA site. The RRM domain maps to 30 to 108 (TTLYVGNLSF…RLIRVDWDAG (79 aa)).

Belongs to the RRM NCBP2 family. As to quaternary structure, component of the nuclear cap-binding complex (CBC), a heterodimer composed of Cbp80 and Cbp20 that interacts with m7GpppG-capped RNA. Interacts with Ars2.

Its subcellular location is the nucleus. In terms of biological role, component of the cap-binding complex (CBC), which binds co-transcriptionally to the 5' cap of pre-mRNAs and is involved in various processes such as pre-mRNA splicing and RNA-mediated gene silencing (RNAi). The CBC complex is involved in miRNA-mediated RNA interference via its interaction with Ars2 and is required for primary microRNAs (miRNAs) processing. Also involved in innate immunity via the short interfering RNAs (siRNAs) processing machinery by restricting the viral RNA production. In the CBC complex, Cbp20 recognizes and binds capped RNAs (m7GpppG-capped RNA) but requires Cbp80 to stabilize the movement of its N-terminal loop and lock the CBC into a high affinity cap-binding state with the cap structure. The sequence is that of Nuclear cap-binding protein subunit 2 (Cbp20) from Drosophila ananassae (Fruit fly).